We begin with the raw amino-acid sequence, 440 residues long: Transposon Ty1-BL Gag polyprotein (440 aa).

Polar residues-rich tracts occupy residues 20–31 (SVTSKEVQTTQD), 46–55 (VSTQANSQQP), and 137–168 (VGTHLNTPSPESGNSFPDSSSAKSNMTSTNQH). 3 disordered regions span residues 20–84 (SVTS…QNGP), 137–173 (VGTHLNTPSPESGNSFPDSSSAKSNMTSTNQHVRPPP), and 350–424 (QQES…TTEP). The tract at residues 299–401 (NNGIPINNKV…NSQSRTARAH (103 aa)) is RNA-binding. The span at 363 to 372 (SPSDEKKDSR) shows a compositional bias: basic and acidic residues. Polar residues predominate over residues 373–411 (TYTNTTKPKSITRNSQKPNNSQSRTARAHNVSTFNNSPG).

Homotrimer.

It localises to the cytoplasm. Functionally, capsid protein (CA) is the structural component of the virus-like particle (VLP), forming the shell that encapsulates the retrotransposons dimeric RNA genome. The particles are assembled from trimer-clustered units and there are holes in the capsid shells that allow for the diffusion of macromolecules. CA also has nucleocapsid-like chaperone activity, promoting primer tRNA(i)-Met annealing to the multipartite primer-binding site (PBS), dimerization of Ty1 RNA and initiation of reverse transcription. The protein is Transposon Ty1-BL Gag polyprotein (TY1A-BL) of Saccharomyces cerevisiae (strain ATCC 204508 / S288c) (Baker's yeast).